The following is a 341-amino-acid chain: tRNA N6-adenosine threonylcarbamoyltransferase (341 aa).

2 residues coordinate Fe cation: His-111 and His-115. Residues 134–138 (LVSGG), Asp-167, Gly-180, and Asn-272 each bind substrate. Asp-300 provides a ligand contact to Fe cation.

It belongs to the KAE1 / TsaD family. Fe(2+) serves as cofactor.

The protein localises to the cytoplasm. The catalysed reaction is L-threonylcarbamoyladenylate + adenosine(37) in tRNA = N(6)-L-threonylcarbamoyladenosine(37) in tRNA + AMP + H(+). Its function is as follows. Required for the formation of a threonylcarbamoyl group on adenosine at position 37 (t(6)A37) in tRNAs that read codons beginning with adenine. Is involved in the transfer of the threonylcarbamoyl moiety of threonylcarbamoyl-AMP (TC-AMP) to the N6 group of A37, together with TsaE and TsaB. TsaD likely plays a direct catalytic role in this reaction. The sequence is that of tRNA N6-adenosine threonylcarbamoyltransferase from Blochmanniella pennsylvanica (strain BPEN).